Reading from the N-terminus, the 286-residue chain is Eukaryotic translation initiation factor 3 subunit F-2 (286 aa).

The MPN domain maps to 11-147; that stretch reads ILLQPLVLLH…MRLYTAVVMG (137 aa).

It belongs to the eIF-3 subunit F family. As to quaternary structure, component of the eukaryotic translation initiation factor 3 (eIF-3) complex. The eIF-3 complex interacts with pix.

It localises to the cytoplasm. Its function is as follows. Component of the eukaryotic translation initiation factor 3 (eIF-3) complex, which is involved in protein synthesis of a specialized repertoire of mRNAs and, together with other initiation factors, stimulates binding of mRNA and methionyl-tRNAi to the 40S ribosome. The eIF-3 complex specifically targets and initiates translation of a subset of mRNAs involved in cell proliferation. This is Eukaryotic translation initiation factor 3 subunit F-2 from Drosophila willistoni (Fruit fly).